A 36-amino-acid chain; its full sequence is Ostricacin-1 (36 aa).

Cystine bridges form between Cys3-Cys29, Cys8-Cys23, and Cys13-Cys30.

The protein localises to the secreted. Functionally, has antibacterial activity against the Gram-positive bacteria S.aureus 1056 MRSA (MIC=1.25 ug/ml) and S.aureus NCTC 4163 (MIC=6.7 ug/ml), and the Gram-negative bacteria E.coli O157:H7 (MIC=0.96 ug/ml) and E.coli 0111 (MIC=6.7 ug/ml). Does not have antifungal activity against the yeast C.albicans 3153A. The sequence is that of Ostricacin-1 from Struthio camelus (Common ostrich).